A 413-amino-acid chain; its full sequence is L-cysteine:1D-myo-inositol 2-amino-2-deoxy-alpha-D-glucopyranoside ligase (413 aa).

Residues 1-21 form a disordered region; it reads MQSWSDTALPSVPGQGPPLRL. Cysteine 43 contacts Zn(2+). L-cysteinyl-5'-AMP contacts are provided by residues 43-46, threonine 58, and 81-83; these read CGIT and NVT. The short motif at 45–55 is the 'HIGH' region element; that stretch reads ITPYDATHLGH. Positions 187 to 192 match the 'ERGGDP' region motif; it reads ERGGDP. Tryptophan 227 contributes to the L-cysteinyl-5'-AMP binding site. Residue cysteine 231 coordinates Zn(2+). 249 to 251 provides a ligand contact to L-cysteinyl-5'-AMP; that stretch reads GSD. Histidine 256 contributes to the Zn(2+) binding site. Isoleucine 283 serves as a coordination point for L-cysteinyl-5'-AMP. A 'KMSKS' region motif is present at residues 289-293; that stretch reads KMSKS.

This sequence belongs to the class-I aminoacyl-tRNA synthetase family. MshC subfamily. In terms of assembly, monomer. The cofactor is Zn(2+).

The catalysed reaction is 1D-myo-inositol 2-amino-2-deoxy-alpha-D-glucopyranoside + L-cysteine + ATP = 1D-myo-inositol 2-(L-cysteinylamino)-2-deoxy-alpha-D-glucopyranoside + AMP + diphosphate + H(+). Catalyzes the ATP-dependent condensation of GlcN-Ins and L-cysteine to form L-Cys-GlcN-Ins. The polypeptide is L-cysteine:1D-myo-inositol 2-amino-2-deoxy-alpha-D-glucopyranoside ligase (Rhodococcus erythropolis (strain PR4 / NBRC 100887)).